The sequence spans 352 residues: Molybdenum import ATP-binding protein ModC (352 aa).

Residues 1 to 229 (MLELNFSQTL…SVMHPWLPKE (229 aa)) enclose the ABC transporter domain. Position 31–38 (31–38 (GVSGAGKT)) interacts with ATP. Residues 289-352 (QTSIRNVLRA…AQVKSVSITA (64 aa)) form the Mop domain.

The protein belongs to the ABC transporter superfamily. Molybdate importer (TC 3.A.1.8) family. In terms of assembly, the complex is composed of two ATP-binding proteins (ModC), two transmembrane proteins (ModB) and a solute-binding protein (ModA).

It is found in the cell inner membrane. The catalysed reaction is molybdate(out) + ATP + H2O = molybdate(in) + ADP + phosphate + H(+). Its function is as follows. Part of the ABC transporter complex ModABC involved in molybdenum import. Responsible for energy coupling to the transport system. This Salmonella typhi protein is Molybdenum import ATP-binding protein ModC.